A 222-amino-acid chain; its full sequence is Iron-sulfur cluster repair protein YtfE (222 aa).

This sequence belongs to the RIC family. YtfE subfamily. In terms of assembly, homodimer.

It is found in the cytoplasm. Its function is as follows. Di-iron-containing protein involved in the repair of iron-sulfur clusters damaged by oxidative and nitrosative stress conditions. This Musicola paradisiaca (strain Ech703) (Dickeya paradisiaca) protein is Iron-sulfur cluster repair protein YtfE.